The primary structure comprises 283 residues: Pantothenate synthetase (283 aa).

30-37 (MGALHEGH) provides a ligand contact to ATP. Histidine 37 serves as the catalytic Proton donor. Glutamine 61 is a (R)-pantoate binding site. Beta-alanine is bound at residue glutamine 61. 147-150 (GEKD) lines the ATP pocket. Glutamine 153 provides a ligand contact to (R)-pantoate. Residues isoleucine 176 and 184–187 (VSSR) contribute to the ATP site.

It belongs to the pantothenate synthetase family. In terms of assembly, homodimer.

The protein localises to the cytoplasm. The enzyme catalyses (R)-pantoate + beta-alanine + ATP = (R)-pantothenate + AMP + diphosphate + H(+). Its pathway is cofactor biosynthesis; (R)-pantothenate biosynthesis; (R)-pantothenate from (R)-pantoate and beta-alanine: step 1/1. Catalyzes the condensation of pantoate with beta-alanine in an ATP-dependent reaction via a pantoyl-adenylate intermediate. The polypeptide is Pantothenate synthetase (Pelodictyon phaeoclathratiforme (strain DSM 5477 / BU-1)).